The primary structure comprises 974 residues: Apical junction component 1 homolog (974 aa).

Disordered regions lie at residues 23–137 (PGLT…PSYP), 201–233 (ARSS…PRHV), and 306–326 (CSRP…GGSY). S52 carries the phosphoserine modification. Residues 69-79 (EPPPPEPAPPR) are compositionally biased toward pro residues. Positions 116-134 (RGREAQRAVRVEGSPRREP) are enriched in basic and acidic residues. S129 carries the post-translational modification Phosphoserine. Positions 201-216 (ARSSRSCAPRETTSWA) are enriched in polar residues. At R322 the chain carries Omega-N-methylarginine. Phosphoserine is present on residues S468, S509, and S512. The segment at 539–576 (DLRSVDRPTAKGWELPGGRPRQPVSTVPEGPASSRQRS) is disordered. At S593 the chain carries Phosphoserine. The tract at residues 618–661 (AGPGGATLLAPSRSPPASAGSTEEPTGSGEAADASPEPSADEDD) is disordered. Over residues 623–636 (ATLLAPSRSPPASA) the composition is skewed to low complexity. R749 carries the asymmetric dimethylarginine; alternate modification. R749 bears the Omega-N-methylarginine; alternate mark.

It localises to the apical cell membrane. The protein localises to the cell projection. It is found in the cilium. Its subcellular location is the cell junction. The protein resides in the adherens junction. Its function is as follows. May be involved in the control of adherens junction integrity. The sequence is that of Apical junction component 1 homolog (Ajm1) from Mus musculus (Mouse).